Reading from the N-terminus, the 491-residue chain is Protein DETOXIFICATION 56 (491 aa).

12 consecutive transmembrane segments (helical) span residues 39 to 59 (LPLVVMNLLWFGKMTTTSVFL), 72 to 92 (LGFSFANVTGFSVLYGISAAM), 111 to 131 (TLFMAVLLLLLISVPISFLWL), 154 to 174 (LLYLLPELPILSFLCPLKAYL), 181 to 201 (LPIMFTTAAATSLHIPINIVL), 212 to 232 (MAVWITDFIVVILLTGYVIVV), 261 to 281 (GPCCLTVCLEWWCYEILVLLT), 291 to 311 (VSILIIVFNFDYLLYAVMLSL), 336 to 356 (YTTLIVGIISGCIGALVMIAF), 379 to 399 (MLIMAVIEVVNFPLMVCGEIV), 409 to 429 (MYANLSGFYLLALPLGATLAF), and 438 to 458 (FLIGLFVGISLCLSILLIFIA).

The protein belongs to the multi antimicrobial extrusion (MATE) (TC 2.A.66.1) family. In terms of assembly, interacts with BCA4 and HT1. Preferentially expressed in guard cells.

Its subcellular location is the cell membrane. Could function as a HCO(3)(-) -sensing component in the CO(2) signaling pathway in guard cells. Acts as an upstream repressor of HT1. Plays a role in stomatal response to CO(2). This Arabidopsis thaliana (Mouse-ear cress) protein is Protein DETOXIFICATION 56.